The primary structure comprises 577 residues: Phosphoethanolamine transferase EptC (577 aa).

Transmembrane regions (helical) follow at residues 17-37, 44-64, 69-89, 119-139, and 154-174; these read LGWALLYFWFFSTLLQAIIYI, NGIRDSLLFSSLWLIPVFLFP, IIAAVIGVVLWAASLAALCYY, YFSLKIVLIALAYTAVAVLLW, and VVSFALLYGLILHPIAMNTFI.

The protein belongs to the phosphoethanolamine transferase family. EptC/CptA subfamily. As to quaternary structure, forms a complex with an unidentified protein of approximately 36 kDa.

It is found in the cell inner membrane. It functions in the pathway bacterial outer membrane biogenesis; LPS core biosynthesis. Functionally, catalyzes the addition of a phosphoethanolamine moiety to the outer membrane lipopolysaccharide core. The chain is Phosphoethanolamine transferase EptC (eptC) from Escherichia coli (strain K12).